The following is a 463-amino-acid chain: MKKIILVGRPNVGKSSLFNRLAKQRIAITSDVSGTTRDTNKAEIFIDDKNCILIDSGGLDDSNELFKNVKINTLNEAKNADIIVFMVDGKNFPDEIDKRFFYELSNLNKPIALVVNKVDSKKDEERSWEFNEFGAKYIFNLSVSHNLGTDELRDWIYKLIPKSKIKADTSDDFDEFLDCVNEHGEMGLPSVDYETKNIKIGIIGRVNVGKSSLLNALVKEDRSVVSKIAGTTIDPVNESYVYEDRVFEFVDTAGIRKRGKIEGIERLALHRTEKILEEADIALLVLDASEPLTELDERIAGLGAKFELGLIIVLNKWDKDHGEFDKVVYELRDKFKFLAYAPIISVSALGGKRVHKLYPLILEVYKNYTQKMKTSRLNEVLEEAIRTHPIPRDHGKIVKIYYGVQFGFAPPKIALIMNKPRSLHFSYKRYLLNKLRENYELSGTPVILIPKNRSQKESTENEN.

2 EngA-type G domains span residues 2-164 and 198-369; these read KKII…PKSK and IKIG…KNYT. GTP is bound by residues 8–15, 55–59, 116–119, 204–211, 251–255, and 315–318; these read GRPNVGKS, DSGGL, NKVD, GRVNVGKS, DTAGI, and NKWD. A KH-like domain is found at 370–454; that stretch reads QKMKTSRLNE…PVILIPKNRS (85 aa).

This sequence belongs to the TRAFAC class TrmE-Era-EngA-EngB-Septin-like GTPase superfamily. EngA (Der) GTPase family. Associates with the 50S ribosomal subunit.

Functionally, GTPase that plays an essential role in the late steps of ribosome biogenesis. The chain is GTPase Der from Campylobacter fetus subsp. fetus (strain 82-40).